An 886-amino-acid polypeptide reads, in one-letter code: 3',5'-cyclic-AMP phosphodiesterase 4A (886 aa).

The tract at residues 1-128 (MEPPTVPSER…GRSPLDSQAS (128 aa)) is disordered. At S13 the chain carries Phosphoserine. Over residues 36 to 46 (QPRTPIRIQQR) the composition is skewed to low complexity. Positions 51 to 78 (SAERAERERQPHRPIERADAMDTSDRPG) are enriched in basic and acidic residues. The span at 93–104 (TGTGSGGAGGGS) shows a compositional bias: gly residues. G119 and L123 each carry phosphoserine. S152 carries the post-translational modification Phosphoserine; by MAPKAPK2. Phosphoserine occurs at positions 157, 165, and 209. Positions 294–331 (KQNEVEIPSPTMKEREKQQAPRPRPSQPPPPPVPHLQP) are disordered. A compositionally biased stretch (pro residues) spans 315–328 (RPRPSQPPPPPVPH). S346 carries the post-translational modification Phosphoserine. In terms of domain architecture, PDEase spans 357–686 (VKTDQEELLA…DWYYSAIRQS (330 aa)). Residue K358 forms a Glycyl lysine isopeptide (Lys-Gly) (interchain with G-Cter in SUMO) linkage. Catalysis depends on H433, which acts as the Proton donor. Position 433 (H433) interacts with 3',5'-cyclic AMP. AMP contacts are provided by H433 and H437. Positions 437, 473, 474, and 591 each coordinate Zn(2+). D474, D591, Q642, and F645 together coordinate AMP. D474 lines the Mg(2+) pocket. D474 contributes to the Mn(2+) binding site. Residues Q642 and F645 each contribute to the 3',5'-cyclic AMP site. Disordered stretches follow at residues 682–705 (AIRQ…PLPD) and 866–886 (FGED…GDPT). A phosphoserine mark is found at S686 and S688. Residues 876–886 (PGGGGSGGDPT) show a composition bias toward gly residues.

Belongs to the cyclic nucleotide phosphodiesterase family. PDE4 subfamily. As to quaternary structure, interacts with LYN (via SH3 domain). Interacts with ARRB2. Zn(2+) serves as cofactor. The cofactor is Mg(2+). Requires Mn(2+) as cofactor. In terms of processing, proteolytically cleaved by CASP3. Phosphorylated at Ser-119 by PKA. In terms of tissue distribution, expressed in lymphoid cell subsets including CD8-positive T cells and T-helper 2 cells. Expressed in dendritic cells. Highly expressed in liver, stomach, testis, thyroid and adrenal glands and at a lower extent in placenta, kidney, pancreas, ovary, uterus and skin. Expressed in myeloid cell subsets including dendritic cells, monocytes, macrophages, eosinophils and mast cells. Expressed in natural killer cells. Expressed in bronchial smooth muscle. As to expression, expressed at high levels in the heart and small intestine. It is also found in the brain, kidney, spleen, colon, salivary gland, ovary and peripheral blood lymphocytes. In terms of tissue distribution, expressed predominantly in skeletal muscle and brain and at lower levels in the testis. Found in specific neuronal subpopulations including cortical pyramidal neurons, horn neurons in the spinal cord and Purkinje cells in cerebellum (at protein level).

The protein resides in the cytoplasm. It is found in the perinuclear region. The protein localises to the cell projection. Its subcellular location is the ruffle membrane. It localises to the cytosol. The protein resides in the membrane. It catalyses the reaction 3',5'-cyclic AMP + H2O = AMP + H(+). The protein operates within purine metabolism; 3',5'-cyclic AMP degradation; AMP from 3',5'-cyclic AMP: step 1/1. Its activity is regulated as follows. Inhibited by rolipram, cilomilast, Ro 20-1724, roflumilast and denbufylline. Inhibited by rolipram. With respect to regulation, inhibited by rolipram and cilomilast. Functionally, hydrolyzes the second messenger 3',5'-cyclic AMP (cAMP), which is a key regulator of many important physiological processes. In terms of biological role, efficiently hydrolyzes cAMP. Its function is as follows. Efficiently hydrolyzes cAMP. The phosphodiesterase activity is not affected by calcium, calmodulin or cyclic GMP (cGMP) levels. Does not hydrolyze cGMP. This Homo sapiens (Human) protein is 3',5'-cyclic-AMP phosphodiesterase 4A (PDE4A).